Here is a 100-residue protein sequence, read N- to C-terminus: Small ribosomal subunit protein uS14c (100 aa).

The protein belongs to the universal ribosomal protein uS14 family. Part of the 30S ribosomal subunit.

It is found in the plastid. The protein localises to the chloroplast. Its function is as follows. Binds 16S rRNA, required for the assembly of 30S particles. This is Small ribosomal subunit protein uS14c from Huperzia lucidula (Shining clubmoss).